The sequence spans 213 residues: Protein big brother (213 aa).

Belongs to the CBF-beta family.

It is found in the nucleus. In terms of biological role, regulates the DNA-binding properties of Runt. The sequence is that of Protein big brother (Bgb) from Drosophila melanogaster (Fruit fly).